Here is a 580-residue protein sequence, read N- to C-terminus: NADH-quinone oxidoreductase subunit C/D (580 aa).

Residues 1-171 (MSLDQAIPEA…PPFVLTDRLF (171 aa)) form an NADH dehydrogenase I subunit C region. Positions 195-580 (ELMVLNFGPH…IDFVMSDVDR (386 aa)) are NADH dehydrogenase I subunit D.

It in the N-terminal section; belongs to the complex I 30 kDa subunit family. In the C-terminal section; belongs to the complex I 49 kDa subunit family. NDH-1 is composed of 13 different subunits. Subunits NuoB, CD, E, F, and G constitute the peripheral sector of the complex.

It localises to the cell inner membrane. It catalyses the reaction a quinone + NADH + 5 H(+)(in) = a quinol + NAD(+) + 4 H(+)(out). NDH-1 shuttles electrons from NADH, via FMN and iron-sulfur (Fe-S) centers, to quinones in the respiratory chain. The immediate electron acceptor for the enzyme in this species is believed to be ubiquinone. Couples the redox reaction to proton translocation (for every two electrons transferred, four hydrogen ions are translocated across the cytoplasmic membrane), and thus conserves the redox energy in a proton gradient. The polypeptide is NADH-quinone oxidoreductase subunit C/D (Cereibacter sphaeroides (strain KD131 / KCTC 12085) (Rhodobacter sphaeroides)).